The sequence spans 228 residues: Urease subunit gamma/beta (228 aa).

Residues 1–101 (MQLTERERDK…LVTVHDPIRG (101 aa)) are urease gamma. The tract at residues 102 to 228 (AASRRVAGEY…ARAAGFGGAQ (127 aa)) is urease beta.

In the N-terminal section; belongs to the urease gamma subunit family. It in the C-terminal section; belongs to the urease beta subunit family. As to quaternary structure, heterohexamer of 3 UreC (alpha) and 3 UreAB (gamma/beta) subunits.

The protein resides in the cytoplasm. It catalyses the reaction urea + 2 H2O + H(+) = hydrogencarbonate + 2 NH4(+). It functions in the pathway nitrogen metabolism; urea degradation; CO(2) and NH(3) from urea (urease route): step 1/1. The chain is Urease subunit gamma/beta from Deinococcus radiodurans (strain ATCC 13939 / DSM 20539 / JCM 16871 / CCUG 27074 / LMG 4051 / NBRC 15346 / NCIMB 9279 / VKM B-1422 / R1).